Here is a 503-residue protein sequence, read N- to C-terminus: Medium/long-chain-fatty-acid--CoA ligase FadD17 (503 aa).

This sequence belongs to the ATP-dependent AMP-binding enzyme family.

It catalyses the reaction a medium-chain fatty acid + ATP + CoA = a medium-chain fatty acyl-CoA + AMP + diphosphate. The catalysed reaction is a long-chain fatty acid + ATP + CoA = a long-chain fatty acyl-CoA + AMP + diphosphate. It participates in lipid metabolism; fatty acid biosynthesis. Its function is as follows. Catalyzes the activation of medium/long-chain fatty acids as acyl-coenzyme A (acyl-CoA), which are then transferred to the multifunctional polyketide synthase (PKS) type III for further chain extension. This is Medium/long-chain-fatty-acid--CoA ligase FadD17 (fadD17) from Mycobacterium marinum (strain ATCC BAA-535 / M).